A 129-amino-acid chain; its full sequence is Lysozyme C (129 aa).

A C-type lysozyme domain is found at 1–129; the sequence is KVYGRCELAA…VHAWIRGCRL (129 aa). 4 cysteine pairs are disulfide-bonded: cysteine 6-cysteine 127, cysteine 30-cysteine 115, cysteine 64-cysteine 80, and cysteine 76-cysteine 94. Catalysis depends on residues glutamate 35 and aspartate 52.

The protein belongs to the glycosyl hydrolase 22 family. In terms of assembly, monomer.

The protein localises to the secreted. The enzyme catalyses Hydrolysis of (1-&gt;4)-beta-linkages between N-acetylmuramic acid and N-acetyl-D-glucosamine residues in a peptidoglycan and between N-acetyl-D-glucosamine residues in chitodextrins.. Its function is as follows. Lysozymes have primarily a bacteriolytic function; those in tissues and body fluids are associated with the monocyte-macrophage system and enhance the activity of immunoagents. The sequence is that of Lysozyme C (LYZ) from Tragopan temminckii (Temminck's tragopan).